A 1281-amino-acid polypeptide reads, in one-letter code: Protein ETHYLENE-INSENSITIVE 2 (1281 aa).

The Cytoplasmic portion of the chain corresponds to 1–21; the sequence is MDGQQLRSSESPASGGGGVTG. The chain crosses the membrane as a helical span at residues 22 to 42; sequence GGAPHLFHALGPALLISIGYI. The Extracellular portion of the chain corresponds to 43-61; sequence DLGKWVAAVEAGSRFGLDL. A helical transmembrane segment spans residues 62-82; it reads VLLALLFNFMAILCQYLAACI. Residues 83 to 112 are Cytoplasmic-facing; sequence GTVTGRSLAEICHQEYSRPTCIFLGVQAGL. A helical membrane pass occupies residues 113–133; the sequence is SLLTSELTMIFGIALGFNLLF. Topologically, residues 134–137 are extracellular; sequence EYDD. The chain crosses the membrane as a helical span at residues 138-158; that stretch reads LITGICFATVVPNLLPYAISH. The Cytoplasmic portion of the chain corresponds to 159-163; that stretch reads LGKKM. The helical transmembrane segment at 164 to 184 threads the bilayer; sequence VGTLNACIAGFALLCYVLGLL. The Extracellular segment spans residues 185-208; that stretch reads VSQPQIPLTTNVIFPKLSGESAYS. A helical transmembrane segment spans residues 209–229; it reads LMALLGANVMAHNFYIHSSVV. Over 230–238 the chain is Cytoplasmic; it reads QGQKRSAFA. The helical transmembrane segment at 239 to 259 threads the bilayer; sequence VGALFHDHLFSVLFIFTGIFL. The Extracellular segment spans residues 260 to 297; that stretch reads VNHVLMNSAAADSTNTLLLTFQDVVELMNQIFVNPMAP. A helical transmembrane segment spans residues 298–318; that stretch reads TIFLVVLLFSSHIISLTSAIG. Residues 319–325 lie on the Cytoplasmic side of the membrane; the sequence is SQVISQH. The chain crosses the membrane as a helical span at residues 326–346; it reads LFGINLPLSGHHLILKAFAIV. Over 347-362 the chain is Extracellular; it reads PALYCAKVAGAEGIYQ. Residues 363–383 traverse the membrane as a helical segment; that stretch reads LLIICQIIQAMLLPSSVVPLF. Residues 384–400 lie on the Cytoplasmic side of the membrane; that stretch reads RVASSRLIMGAHRVSLH. The helical transmembrane segment at 401–421 threads the bilayer; it reads LEILTFLAFLLMLFSNIIFMA. At 422 to 447 the chain is on the extracellular side; sequence EMLFGDSGWLNTLKGNTGSPVVFPST. Residues 448-468 traverse the membrane as a helical segment; it reads VLITVACVSVAFSLYMAVTPL. Residues 469-1281 are Cytoplasmic-facing; sequence KSGSHEAELQ…KRRLSSKGQQ (813 aa). Disordered regions lie at residues 540–565 and 593–665; these read IESD…SPSF and ESTV…NGSG. Residues 548–557 are compositionally biased toward polar residues; sequence HSTAHTSTAP. A compositionally biased stretch (basic and acidic residues) spans 599-610; that stretch reads VDSKSTGERDIE.

It belongs to the NRAMP (TC 2.A.55) family. As to expression, expressed in roots, leaf sheaths, leaf blades, flowers, developing seeds, germinating seeds and young seedlings. Expressed in adventitious roots, vascular tissues of the seminal roots, lateral roots, the connecting region between vascular tissues and lateral roots, mature leaf, mature stem, tips of adventitious roots derived from the node, shoot apex, young panicle, anthers, pistil, stigma, ovary, seed coat and fruit coat pericarp.

It is found in the membrane. Functionally, central factor in ethylene signaling pathways that control development, senescence and grain size. Acts as a positive component of the ethylene-signaling pathway. This Oryza sativa subsp. japonica (Rice) protein is Protein ETHYLENE-INSENSITIVE 2.